A 120-amino-acid chain; its full sequence is MLTFNQLIKNSRKKKNKFKNSILNRCPQKKGICLKVFTKSPKKPNSALRKVVKIRLSNNKEIIAYIPGEGYAIQEHNYALIKGGKVQDLPGIRYKIIRGALNVSGVKNRKSSRSKYGTKK.

Belongs to the universal ribosomal protein uS12 family. In terms of assembly, part of the 30S ribosomal subunit.

The protein resides in the plastid. Its subcellular location is the apicoplast. Its function is as follows. With S4 and S5 plays an important role in translational accuracy. Located at the interface of the 30S and 50S subunits. This Eimeria tenella (Coccidian parasite) protein is Small ribosomal subunit protein uS12c (rps12).